Consider the following 827-residue polypeptide: Glycerol-3-phosphate acyltransferase (827 aa).

The HXXXXD motif signature appears at 325–330 (CHRSHM).

Belongs to the GPAT/DAPAT family.

The protein localises to the cell inner membrane. The enzyme catalyses sn-glycerol 3-phosphate + an acyl-CoA = a 1-acyl-sn-glycero-3-phosphate + CoA. The protein operates within phospholipid metabolism; CDP-diacylglycerol biosynthesis; CDP-diacylglycerol from sn-glycerol 3-phosphate: step 1/3. The sequence is that of Glycerol-3-phosphate acyltransferase from Shigella boydii serotype 4 (strain Sb227).